Here is a 327-residue protein sequence, read N- to C-terminus: Ribosomal RNA large subunit methyltransferase F (327 aa).

The disordered stretch occupies residues methionine 1–glutamine 31.

This sequence belongs to the methyltransferase superfamily. METTL16/RlmF family.

It is found in the cytoplasm. The catalysed reaction is adenosine(1618) in 23S rRNA + S-adenosyl-L-methionine = N(6)-methyladenosine(1618) in 23S rRNA + S-adenosyl-L-homocysteine + H(+). In terms of biological role, specifically methylates the adenine in position 1618 of 23S rRNA. This Psychrobacter sp. (strain PRwf-1) protein is Ribosomal RNA large subunit methyltransferase F.